The primary structure comprises 222 residues: 4'-phosphopantetheinyl transferase Npt (222 aa).

Mg(2+) is bound by residues D105, E107, and E147.

The protein belongs to the P-Pant transferase superfamily. In terms of assembly, monomer. Mg(2+) is required as a cofactor.

The enzyme catalyses apo-[ACP] + CoA = holo-[ACP] + adenosine 3',5'-bisphosphate + H(+). Functionally, catalyzes the transfer of the 4'-phosphopantetheine moiety from coenzyme A to a serine residue in the acyl-carrier domain of carboxylic acid reductase Car, thus converting apo-Car to fully active holo-Car. Is probably also responsible for the activation of other proteins with phosphopantetheine attachment sites. The polypeptide is 4'-phosphopantetheinyl transferase Npt (npt) (Nocardia iowensis).